The primary structure comprises 83 residues: High-potential iron-sulfur protein (83 aa).

Cys-43, Cys-46, Cys-61, and Cys-75 together coordinate [4Fe-4S] cluster.

The protein belongs to the high-potential iron-sulfur protein (HiPIP) family. As to quaternary structure, homodimer.

The protein localises to the periplasm. Functionally, specific class of high-redox-potential 4Fe-4S ferredoxins. Functions in anaerobic electron transport in most purple and in some other photosynthetic bacteria and in at least one genus (Paracoccus) of halophilic, denitrifying bacteria. The chain is High-potential iron-sulfur protein (hip) from Marichromatium gracile (Chromatium gracile).